Reading from the N-terminus, the 215-residue chain is uncharacterized protein (215 aa).

Belongs to the thiaminase-2 family.

This is an uncharacterized protein from Haemophilus influenzae (strain ATCC 51907 / DSM 11121 / KW20 / Rd).